A 184-amino-acid polypeptide reads, in one-letter code: GTP-binding protein Rheb (184 aa).

Lys-8 is covalently cross-linked (Glycyl lysine isopeptide (Lys-Gly) (interchain with G-Cter in ubiquitin)). Residues Ser-16 and Val-17 each coordinate GDP. Residue Ser-16 participates in GTP binding. GTP contacts are provided by Gly-18, Lys-19, Ser-20, Ser-21, Val-32, Tyr-35, Thr-38, Asn-119, and Asp-122. Residues Lys-19, Ser-20, and Ser-21 each contribute to the GDP site. Residue Ser-20 coordinates Mg(2+). The Effector region signature appears at 35–43; that stretch reads YDPTIENTF. Position 38 (Thr-38) interacts with GDP. Mg(2+) is bound at residue Thr-38. Asp-122 contacts GDP. Position 130 is a phosphoserine; by MAPKAPK5 (Ser-130). Ala-150 contributes to the GDP binding site. Ala-150 is a GTP binding site. Cys-181 bears the Cysteine methyl ester mark. Cys-181 carries S-farnesyl cysteine lipidation. Positions 182-184 are cleaved as a propeptide — removed in mature form; the sequence is SVM.

The protein belongs to the small GTPase superfamily. Rheb family. In terms of assembly, associates with the mTORC1 complex (MTOR, MLST8 and RPTOR) in a guanyl nucleotide-independent manner. Interacts with TSC2. Interacts with MCRS1; the interaction maintains RHEB at the lysosome in its active GTP-bound form and prevents its interaction with the mTORC1 complex inhibitor TSC2, ensuring activation of the mTORC1 complex by RHEB. Interacts (when prenylated) with PDE6D; this promotes release from membranes. In terms of processing, farnesylation is important for efficiently activating mTORC1-mediated signaling. Polyubiquitinated in response to amino acid, promoting its interaction with MTOR and mTORC1 activation. Deubiquitination by ATXN3 promotes recruitment of the TSC-TBC complex and RHEB inactivation by TSC2. Monoubiquitinated at Lys-8 by RNF152, promoting its association with the TSC-TBC complex. Deubiquitinated at Lys-8 by USP4, promoting mTORC1 activation. Post-translationally, phosphorylation by MAPKAPK5 impairs GTP-binding and inactivation. In terms of tissue distribution, expressed at high levels in normal adult cortex as well as a number of peripheral tissues, including lung and intestine.

The protein resides in the endomembrane system. The protein localises to the lysosome membrane. It is found in the golgi apparatus membrane. Its subcellular location is the endoplasmic reticulum membrane. It localises to the cytoplasm. The protein resides in the cytosol. The catalysed reaction is GTP + H2O = GDP + phosphate + H(+). With respect to regulation, alternates between an inactive form bound to GDP and an active form bound to GTP. Inactivated by the TSC-TBC complex via the GTPase activating protein (GAP) domain of TSC2. Autoinhibited by Tyr-35, which constrains the active site conformation, restricting the access of the catalytic Asp-65 to the nucleotide-binding pocket. Its function is as follows. Small GTPase that acts as an allosteric activator of the canonical mTORC1 complex, an evolutionarily conserved central nutrient sensor that stimulates anabolic reactions and macromolecule biosynthesis to promote cellular biomass generation and growth. In response to nutrients, growth factors or amino acids, specifically activates the protein kinase activity of MTOR, the catalytic component of the mTORC1 complex: acts by causing a conformational change that allows the alignment of residues in the active site of MTOR, thereby enhancing the phosphorylation of ribosomal protein S6 kinase (RPS6KB1 and RPS6KB2) and EIF4EBP1 (4E-BP1). RHEB is also required for localization of the TSC-TBC complex to lysosomal membranes. In response to starvation, RHEB is inactivated by the TSC-TBC complex, preventing activation of mTORC1. Has low intrinsic GTPase activity. In Rattus norvegicus (Rat), this protein is GTP-binding protein Rheb.